The following is a 291-amino-acid chain: Ribosomal RNA small subunit methyltransferase H (291 aa).

Residues 31 to 33 (GGY), aspartate 49, phenylalanine 76, aspartate 97, and glutamine 104 contribute to the S-adenosyl-L-methionine site.

It belongs to the methyltransferase superfamily. RsmH family.

Its subcellular location is the cytoplasm. It catalyses the reaction cytidine(1402) in 16S rRNA + S-adenosyl-L-methionine = N(4)-methylcytidine(1402) in 16S rRNA + S-adenosyl-L-homocysteine + H(+). Functionally, specifically methylates the N4 position of cytidine in position 1402 (C1402) of 16S rRNA. The sequence is that of Ribosomal RNA small subunit methyltransferase H from Anaplasma marginale (strain St. Maries).